Here is a 135-residue protein sequence, read N- to C-terminus: Small ribosomal subunit protein uS11 (135 aa).

It belongs to the universal ribosomal protein uS11 family. Part of the 30S ribosomal subunit. Interacts with proteins S7 and S18. Binds to IF-3.

Located on the platform of the 30S subunit, it bridges several disparate RNA helices of the 16S rRNA. Forms part of the Shine-Dalgarno cleft in the 70S ribosome. The sequence is that of Small ribosomal subunit protein uS11 from Polynucleobacter asymbioticus (strain DSM 18221 / CIP 109841 / QLW-P1DMWA-1) (Polynucleobacter necessarius subsp. asymbioticus).